Reading from the N-terminus, the 253-residue chain is Phosphate import ATP-binding protein PstB 3 (253 aa).

In terms of domain architecture, ABC transporter spans 8–248 (LVINNLDLYY…PQDERTENYI (241 aa)). 40–47 (GPSGCGKS) serves as a coordination point for ATP.

It belongs to the ABC transporter superfamily. Phosphate importer (TC 3.A.1.7) family. In terms of assembly, the complex is composed of two ATP-binding proteins (PstB), two transmembrane proteins (PstC and PstA) and a solute-binding protein (PstS).

The protein resides in the cell membrane. It carries out the reaction phosphate(out) + ATP + H2O = ADP + 2 phosphate(in) + H(+). Functionally, part of the ABC transporter complex PstSACB involved in phosphate import. Responsible for energy coupling to the transport system. This is Phosphate import ATP-binding protein PstB 3 from Streptococcus agalactiae serotype III (strain NEM316).